The following is a 104-amino-acid chain: Large ribosomal subunit protein uL24 (104 aa).

This sequence belongs to the universal ribosomal protein uL24 family. As to quaternary structure, part of the 50S ribosomal subunit.

One of two assembly initiator proteins, it binds directly to the 5'-end of the 23S rRNA, where it nucleates assembly of the 50S subunit. Its function is as follows. One of the proteins that surrounds the polypeptide exit tunnel on the outside of the subunit. The sequence is that of Large ribosomal subunit protein uL24 from Bradyrhizobium diazoefficiens (strain JCM 10833 / BCRC 13528 / IAM 13628 / NBRC 14792 / USDA 110).